A 570-amino-acid polypeptide reads, in one-letter code: Arginine--tRNA ligase (570 aa).

The short motif at 127 to 137 (ANPTGPLHLGH) is the 'HIGH' region element.

Belongs to the class-I aminoacyl-tRNA synthetase family. In terms of assembly, monomer.

The protein resides in the cytoplasm. It carries out the reaction tRNA(Arg) + L-arginine + ATP = L-arginyl-tRNA(Arg) + AMP + diphosphate. The protein is Arginine--tRNA ligase of Neorickettsia sennetsu (strain ATCC VR-367 / Miyayama) (Ehrlichia sennetsu).